Consider the following 84-residue polypeptide: Small ribosomal subunit protein eS27w (84 aa).

The C4-type zinc finger occupies 39–61 (CQGCFNITTVFSHSQTVVVCGNC).

It belongs to the eukaryotic ribosomal protein eS27 family. Zn(2+) serves as cofactor.

The sequence is that of Small ribosomal subunit protein eS27w (RPS27D) from Arabidopsis thaliana (Mouse-ear cress).